Consider the following 218-residue polypeptide: GTP cyclohydrolase 1 (218 aa).

Zn(2+) contacts are provided by Cys109, His112, and Cys180.

Belongs to the GTP cyclohydrolase I family. As to quaternary structure, toroid-shaped homodecamer, composed of two pentamers of five dimers.

The enzyme catalyses GTP + H2O = 7,8-dihydroneopterin 3'-triphosphate + formate + H(+). It functions in the pathway cofactor biosynthesis; 7,8-dihydroneopterin triphosphate biosynthesis; 7,8-dihydroneopterin triphosphate from GTP: step 1/1. The chain is GTP cyclohydrolase 1 from Aeromonas salmonicida (strain A449).